Reading from the N-terminus, the 904-residue chain is Phosphoenolpyruvate carboxylase (904 aa).

Catalysis depends on residues histidine 151 and lysine 570.

It belongs to the PEPCase type 1 family. Mg(2+) serves as cofactor.

It carries out the reaction oxaloacetate + phosphate = phosphoenolpyruvate + hydrogencarbonate. Forms oxaloacetate, a four-carbon dicarboxylic acid source for the tricarboxylic acid cycle. The polypeptide is Phosphoenolpyruvate carboxylase (Xanthomonas campestris pv. campestris (strain ATCC 33913 / DSM 3586 / NCPPB 528 / LMG 568 / P 25)).